We begin with the raw amino-acid sequence, 41 residues long: Photosystem I reaction center subunit IX (41 aa).

The helical transmembrane segment at 7 to 27 (YLSTAPVVAFAWLTFTAGFII) threads the bilayer.

It belongs to the PsaJ family.

It localises to the plastid. The protein localises to the chloroplast thylakoid membrane. May help in the organization of the PsaE and PsaF subunits. The sequence is that of Photosystem I reaction center subunit IX from Stigeoclonium helveticum (Green alga).